The following is a 348-amino-acid chain: Dihydroorotase (348 aa).

2 residues coordinate Zn(2+): His17 and His19. Substrate-binding positions include 19 to 21 and Asn45; that span reads HLR. Lys103, His140, and His178 together coordinate Zn(2+). Lys103 bears the N6-carboxylysine mark. Residue His140 participates in substrate binding. Leu223 is a binding site for substrate. Residue Asp251 coordinates Zn(2+). Asp251 is a catalytic residue. His255 and Ala267 together coordinate substrate.

This sequence belongs to the metallo-dependent hydrolases superfamily. DHOase family. Class II DHOase subfamily. As to quaternary structure, homodimer. Zn(2+) is required as a cofactor.

The enzyme catalyses (S)-dihydroorotate + H2O = N-carbamoyl-L-aspartate + H(+). It participates in pyrimidine metabolism; UMP biosynthesis via de novo pathway; (S)-dihydroorotate from bicarbonate: step 3/3. Its function is as follows. Catalyzes the reversible cyclization of carbamoyl aspartate to dihydroorotate. This chain is Dihydroorotase, found in Escherichia coli O6:K15:H31 (strain 536 / UPEC).